Reading from the N-terminus, the 1036-residue chain is Isoleucine--tRNA ligase (1036 aa).

The 'HIGH' region signature appears at 46-56 (PFATGLPHYGH). Residues 589 to 593 (KMSKR) carry the 'KMSKS' region motif. Lys-592 provides a ligand contact to ATP.

This sequence belongs to the class-I aminoacyl-tRNA synthetase family. IleS type 2 subfamily. Monomer. The cofactor is Zn(2+).

Its subcellular location is the cytoplasm. It carries out the reaction tRNA(Ile) + L-isoleucine + ATP = L-isoleucyl-tRNA(Ile) + AMP + diphosphate. Functionally, catalyzes the attachment of isoleucine to tRNA(Ile). As IleRS can inadvertently accommodate and process structurally similar amino acids such as valine, to avoid such errors it has two additional distinct tRNA(Ile)-dependent editing activities. One activity is designated as 'pretransfer' editing and involves the hydrolysis of activated Val-AMP. The other activity is designated 'posttransfer' editing and involves deacylation of mischarged Val-tRNA(Ile). The polypeptide is Isoleucine--tRNA ligase (Chlamydia trachomatis serovar A (strain ATCC VR-571B / DSM 19440 / HAR-13)).